The sequence spans 116 residues: G antigen 2D (116 aa).

Positions 1–116 (MSWRGRSTYR…PEEGEKQSQC (116 aa)) are disordered. Composition is skewed to acidic residues over residues 31-44 (FSDEVEPATPEEGE) and 86-95 (ECEDGPDGQE). Positions 102–116 (EEVKTPEEGEKQSQC) are enriched in basic and acidic residues.

This sequence belongs to the GAGE family. Not expressed in normal tissues, except in testis, but expressed by a large proportion of tumors of various histological origins.

This chain is G antigen 2D (GAGE2D), found in Homo sapiens (Human).